The sequence spans 364 residues: O-methyltransferase 1 (364 aa).

S-adenosyl-L-homocysteine contacts are provided by S183, G207, D230, D250, and K264. D230 is a binding site for S-adenosyl-L-methionine. H268 acts as the Proton acceptor in catalysis.

Belongs to the class I-like SAM-binding methyltransferase superfamily. Cation-independent O-methyltransferase family. Homodimer.

It carries out the reaction dopamine + S-adenosyl-L-methionine = 3-methoxytyramine + S-adenosyl-L-homocysteine + H(+). The catalysed reaction is 3,4-dihydroxy-5-methoxyphenethylamine + S-adenosyl-L-methionine = 4-hydroxy-3,5-dimethoxyphenethylamine + S-adenosyl-L-homocysteine + H(+). Its pathway is aromatic compound metabolism. It participates in alkaloid biosynthesis. Its function is as follows. O-methyltransferase participating in the biosynthesis of natural products derived from phenylethylamine, including mescaline, a natural hallucinogen potentially used in psychotherapeutic treatments. Catalyzes the O-methylation of mescaline meta hydroxyl groups, using dopamine and 3,4-dihydroxy-5-methoxyphenethylamine as substrates. This is O-methyltransferase 1 from Lophophora williamsii (Peyote).